The sequence spans 979 residues: Translation initiation factor IF-2 (979 aa).

The span at 50–77 (LKRSHGQSDDSARKKITLTKRETSEIRQ) shows a compositional bias: basic and acidic residues. The interval 50–385 (LKRSHGQSDD…GKHNADDARS (336 aa)) is disordered. The segment covering 78–87 (SDSTGKTRTV) has biased composition (polar residues). Composition is skewed to basic and acidic residues over residues 98 to 109 (IKRDDVESHGDG), 121 to 142 (EEVR…RQEA), and 149 to 173 (EAAE…RRQA). Positions 174–192 (ELLAQKAAEEAAAAQAAAD) are enriched in low complexity. Basic and acidic residues-rich tracts occupy residues 196–211 (ETAR…RLAT), 219–263 (NADD…EAEA), and 280–291 (PSERKAEEKKAE). The span at 317–327 (APAATTTTAAA) shows a compositional bias: low complexity. The segment covering 351-368 (GGGLKTRGDSSGGVGGWR) has biased composition (gly residues). A tr-type G domain is found at 479–646 (PRPPVVTVMG…NVLLQAEVLE (168 aa)). Positions 488-495 (GHVDHGKT) are G1. Residue 488-495 (GHVDHGKT) participates in GTP binding. The segment at 513–517 (GITQH) is G2. The interval 534-537 (DTPG) is G3. GTP is bound by residues 534–538 (DTPGH) and 588–591 (TKVD). The segment at 588 to 591 (TKVD) is G4. A G5 region spans residues 624–626 (SAK).

The protein belongs to the TRAFAC class translation factor GTPase superfamily. Classic translation factor GTPase family. IF-2 subfamily.

Its subcellular location is the cytoplasm. One of the essential components for the initiation of protein synthesis. Protects formylmethionyl-tRNA from spontaneous hydrolysis and promotes its binding to the 30S ribosomal subunits. Also involved in the hydrolysis of GTP during the formation of the 70S ribosomal complex. The sequence is that of Translation initiation factor IF-2 from Cupriavidus metallidurans (strain ATCC 43123 / DSM 2839 / NBRC 102507 / CH34) (Ralstonia metallidurans).